The sequence spans 285 residues: tRNA uridine(34) hydroxylase (285 aa).

The Rhodanese domain occupies 130–225; that stretch reads RGDDVVFFDG…YGEAFGDTGL (96 aa). The Cysteine persulfide intermediate role is filled by Cys-185.

It belongs to the TrhO family.

It catalyses the reaction uridine(34) in tRNA + AH2 + O2 = 5-hydroxyuridine(34) in tRNA + A + H2O. Its function is as follows. Catalyzes oxygen-dependent 5-hydroxyuridine (ho5U) modification at position 34 in tRNAs. This Rhodococcus jostii (strain RHA1) protein is tRNA uridine(34) hydroxylase.